The following is a 183-amino-acid chain: ATP synthase subunit delta (183 aa).

Belongs to the ATPase delta chain family. F-type ATPases have 2 components, F(1) - the catalytic core - and F(0) - the membrane proton channel. F(1) has five subunits: alpha(3), beta(3), gamma(1), delta(1), epsilon(1). CF(0) has four main subunits: a(1), b(1), b'(1) and c(10-14). The alpha and beta chains form an alternating ring which encloses part of the gamma chain. F(1) is attached to F(0) by a central stalk formed by the gamma and epsilon chains, while a peripheral stalk is formed by the delta, b and b' chains.

It localises to the cellular thylakoid membrane. Functionally, f(1)F(0) ATP synthase produces ATP from ADP in the presence of a proton or sodium gradient. F-type ATPases consist of two structural domains, F(1) containing the extramembraneous catalytic core and F(0) containing the membrane proton channel, linked together by a central stalk and a peripheral stalk. During catalysis, ATP synthesis in the catalytic domain of F(1) is coupled via a rotary mechanism of the central stalk subunits to proton translocation. Its function is as follows. This protein is part of the stalk that links CF(0) to CF(1). It either transmits conformational changes from CF(0) to CF(1) or is implicated in proton conduction. This Trichormus variabilis (strain ATCC 29413 / PCC 7937) (Anabaena variabilis) protein is ATP synthase subunit delta.